The primary structure comprises 134 residues: UPF0412 protein YaaI (134 aa).

A signal peptide spans 1–23 (MRSVLTISAGLLFGLALSSVAHA).

The protein belongs to the UPF0412 family.

The protein is UPF0412 protein YaaI of Salmonella agona (strain SL483).